The primary structure comprises 288 residues: Sulfur carrier protein FdhD (288 aa).

Residues 1 to 23 are disordered; it reads MMRCMQSPEVHPAAAGDAEPPTH. C127 serves as the catalytic Cysteine persulfide intermediate.

Belongs to the FdhD family.

The protein localises to the cytoplasm. Required for formate dehydrogenase (FDH) activity. Acts as a sulfur carrier protein that transfers sulfur from IscS to the molybdenum cofactor prior to its insertion into FDH. This Cupriavidus necator (strain ATCC 17699 / DSM 428 / KCTC 22496 / NCIMB 10442 / H16 / Stanier 337) (Ralstonia eutropha) protein is Sulfur carrier protein FdhD.